The sequence spans 651 residues: Beta-glucuronidase (651 aa).

The signal sequence occupies residues 1 to 22 (MSRGPAGAWVALGPLLWTCGLA). Residues Asn-172 and Asn-419 are each glycosylated (N-linked (GlcNAc...) asparagine). Residue Glu-450 is the Proton donor of the active site. N-linked (GlcNAc...) asparagine glycosylation occurs at Asn-630.

It belongs to the glycosyl hydrolase 2 family. In terms of assembly, homotetramer.

The protein resides in the lysosome. The catalysed reaction is a beta-D-glucuronoside + H2O = D-glucuronate + an alcohol. With respect to regulation, inhibited by L-aspartic acid. Functionally, plays an important role in the degradation of dermatan and keratan sulfates. This Canis lupus familiaris (Dog) protein is Beta-glucuronidase (GUSB).